A 151-amino-acid polypeptide reads, in one-letter code: Deoxyuridine 5'-triphosphate nucleotidohydrolase (151 aa).

Residues 70–72 (RSG), N83, 87–89 (LID), and M97 each bind substrate.

It belongs to the dUTPase family. The cofactor is Mg(2+).

It catalyses the reaction dUTP + H2O = dUMP + diphosphate + H(+). The protein operates within pyrimidine metabolism; dUMP biosynthesis; dUMP from dCTP (dUTP route): step 2/2. Functionally, this enzyme is involved in nucleotide metabolism: it produces dUMP, the immediate precursor of thymidine nucleotides and it decreases the intracellular concentration of dUTP so that uracil cannot be incorporated into DNA. The protein is Deoxyuridine 5'-triphosphate nucleotidohydrolase of Yersinia enterocolitica serotype O:8 / biotype 1B (strain NCTC 13174 / 8081).